Reading from the N-terminus, the 211-residue chain is Histidine biosynthesis bifunctional protein HisIE (211 aa).

The segment at Met1 to Phe117 is phosphoribosyl-AMP cyclohydrolase. The tract at residues Leu118–Lys211 is phosphoribosyl-ATP pyrophosphohydrolase.

The protein in the N-terminal section; belongs to the PRA-CH family. It in the C-terminal section; belongs to the PRA-PH family.

It is found in the cytoplasm. It carries out the reaction 1-(5-phospho-beta-D-ribosyl)-ATP + H2O = 1-(5-phospho-beta-D-ribosyl)-5'-AMP + diphosphate + H(+). The catalysed reaction is 1-(5-phospho-beta-D-ribosyl)-5'-AMP + H2O = 1-(5-phospho-beta-D-ribosyl)-5-[(5-phospho-beta-D-ribosylamino)methylideneamino]imidazole-4-carboxamide. It participates in amino-acid biosynthesis; L-histidine biosynthesis; L-histidine from 5-phospho-alpha-D-ribose 1-diphosphate: step 2/9. It functions in the pathway amino-acid biosynthesis; L-histidine biosynthesis; L-histidine from 5-phospho-alpha-D-ribose 1-diphosphate: step 3/9. This chain is Histidine biosynthesis bifunctional protein HisIE, found in Shewanella oneidensis (strain ATCC 700550 / JCM 31522 / CIP 106686 / LMG 19005 / NCIMB 14063 / MR-1).